We begin with the raw amino-acid sequence, 460 residues long: Transcriptional regulatory protein UME1 (460 aa).

Positions 14–22 match the NEE-box motif; sequence NEEFKIWKK. WD repeat units follow at residues 233 to 271, 276 to 316, 339 to 379, and 411 to 451; these read PGIK…KPLW, SLDG…ALGD, FYSE…AIYN, and GENN…VLDG.

In terms of assembly, component of the RPD3C(L) complex composed of at least ASH1, CTI6, DEP1, PHO23, RPD3, RXT2, RXT3, SAP30, SDS3, SIN3, UME1 and UME6. Component of the RPD3C(S) complex composed of at least EAF3, RCO1, RPD3, SIN3, and UME1. Interacts with RPD3.

It is found in the cytoplasm. The protein resides in the nucleus. In terms of biological role, catalytic component of the RPD3 histone deacetylase complexes RPD3C(L) and RPD3C(S) responsible for the deacetylation of lysine residues on the N-terminal part of the core histones (H2A, H2B, H3 and H4). Histone deacetylation gives a tag for epigenetic repression and plays an important role in transcriptional regulation, cell cycle progression and developmental events. In Saccharomyces cerevisiae (strain ATCC 204508 / S288c) (Baker's yeast), this protein is Transcriptional regulatory protein UME1 (UME1).